We begin with the raw amino-acid sequence, 531 residues long: uncharacterized protein (531 aa).

Positions 1-22 are cleaved as a signal peptide; sequence MRLQFKLLGFLTLLGTSTILSA. The N-palmitoyl cysteine moiety is linked to residue C23. The S-diacylglycerol cysteine moiety is linked to residue C23. The interval 31–51 is disordered; the sequence is EPNNIEESGPITPTTPTTDVP. Residues 40–51 are compositionally biased toward low complexity; the sequence is PITPTTPTTDVP.

This sequence belongs to the MG067/MG068/MG395 family.

Its subcellular location is the cell membrane. This is an uncharacterized protein from Mycoplasma pneumoniae (strain ATCC 29342 / M129 / Subtype 1) (Mycoplasmoides pneumoniae).